The following is a 1171-amino-acid chain: ATP-dependent helicase/deoxyribonuclease subunit B (1171 aa).

Belongs to the helicase family. AddB/RexB type 2 subfamily. In terms of assembly, heterodimer of AddA and RexB. Mg(2+) serves as cofactor.

Functionally, the heterodimer acts as both an ATP-dependent DNA helicase and an ATP-dependent, dual-direction single-stranded exonuclease. Recognizes the chi site generating a DNA molecule suitable for the initiation of homologous recombination. This subunit has 5' -&gt; 3' nuclease activity but not helicase activity. The polypeptide is ATP-dependent helicase/deoxyribonuclease subunit B (Leuconostoc citreum (strain KM20)).